Here is a 170-residue protein sequence, read N- to C-terminus: 3-hydroxydecanoyl-[acyl-carrier-protein] dehydratase (170 aa).

H69 is an active-site residue.

Belongs to the thioester dehydratase family. FabA subfamily. Homodimer.

It is found in the cytoplasm. It carries out the reaction a (3R)-hydroxyacyl-[ACP] = a (2E)-enoyl-[ACP] + H2O. It catalyses the reaction (3R)-hydroxydecanoyl-[ACP] = (2E)-decenoyl-[ACP] + H2O. The catalysed reaction is (2E)-decenoyl-[ACP] = (3Z)-decenoyl-[ACP]. Its pathway is lipid metabolism; fatty acid biosynthesis. In terms of biological role, necessary for the introduction of cis unsaturation into fatty acids. Catalyzes the dehydration of (3R)-3-hydroxydecanoyl-ACP to E-(2)-decenoyl-ACP and then its isomerization to Z-(3)-decenoyl-ACP. Can catalyze the dehydratase reaction for beta-hydroxyacyl-ACPs with saturated chain lengths up to 16:0, being most active on intermediate chain length. The polypeptide is 3-hydroxydecanoyl-[acyl-carrier-protein] dehydratase (Idiomarina loihiensis (strain ATCC BAA-735 / DSM 15497 / L2-TR)).